The sequence spans 707 residues: Zinc finger CCHC domain-containing protein 8 (707 aa).

Ala-2 carries the N-acetylalanine modification. Residues 16–44 (FDHPEESIPKPVHTRFKDDDGDEEDENGV) are disordered. The segment covering 34 to 43 (DDGDEEDENG) has biased composition (acidic residues). Residues 45-80 (GDAELRERLRQCEETIEQLRAENQELKRKLNILTRP) are a coiled coil. Residues 227–244 (PHCFNCGSEEHQMKDCPM) form a CCHC-type zinc finger. 2 RBM7 binding regions span residues 286–299 (FKPGVISEELQDAL) and 309–324 (FIYRMRQLGYPPGWLK). Position 342 is a phosphothreonine (Thr-342). Disordered regions lie at residues 409-518 (APGV…LTLE), 531-607 (LEQA…TSLC), and 641-660 (QKLFPADTSPSTATKIHSPI). A Glycyl lysine isopeptide (Lys-Gly) (interchain with G-Cter in SUMO2) cross-link involves residue Lys-413. Over residues 456–465 (SQSSESFQFQ) the composition is skewed to low complexity. Over residues 466–496 (PPLPPDTPPLPRGTPPPVFTPPLPKGTPPLT) the composition is skewed to pro residues. Residues Thr-472, Thr-479, and Thr-485 each carry the phosphothreonine modification. Thr-492 carries the post-translational modification Phosphothreonine; by GSK3. Positions 516 to 539 (TLEELEEQQRRIWAALEQAESVNS) form a coiled coil. A compositionally biased stretch (polar residues) spans 549–559 (LTGNSVASSPC). Thr-577 is subject to Phosphothreonine. Ser-598 is subject to Phosphoserine. The span at 598–607 (SPDSEVTSLC) shows a compositional bias: polar residues. At Thr-648 the chain carries Phosphothreonine. Phosphoserine occurs at positions 649, 658, and 695. Positions 659 to 707 (PIPDMSKFATGITPFEFENMAESTGMYLRIRSLLKNSPRNQQKNKKASE) are MTREX binding.

The protein belongs to the ZCCHC8 family. As to quaternary structure, component of a nuclear TRAMP-like complex, an ATP-dependent exosome regulatory complex consisting of a helicase (MTREX), an oligadenylate polymerase (TENT4B or TENT4A), and a substrate specific RNA-binding factor (ZCCHC7 or ZCCHC8). Several TRAMP-like complexes exist with specific compositions and are associated with nuclear, or nucleolar RNA exosomes. Identified in the spliceosome C complex. Component of the nuclear exosome targeting (NEXT) complex composed of MTREX, ZCCHC8, and RBM7 that directs a subset of non-coding short-lived RNAs for exosomal degradation. Interacts with proteins involved in RNA processing and degradation such as MTREX and RBM7; interaction with MTREX enhances MTREX RNA helicase activity and bridges between RBM7 and MTREX. Interacts with TERC, the telomerase RNA component. Post-translationally, phosphorylation at Thr-492 by GSK3 is triggered in cells entering mitosis; this phosphorylation is greatly enhanced by nocodazole treatment, but reduced by lithium.

The protein resides in the nucleus. It localises to the nucleoplasm. In terms of biological role, scaffolding subunit of the trimeric nuclear exosome targeting (NEXT) complex that is involved in the surveillance and turnover of aberrant transcripts and non-coding RNAs. NEXT functions as an RNA exosome cofactor that directs a subset of non-coding short-lived RNAs for exosomal degradation. May be involved in pre-mRNA splicing. It is required for 3'-end maturation of telomerase RNA component (TERC), TERC 3'-end targeting to the nuclear RNA exosome, and for telomerase function. The polypeptide is Zinc finger CCHC domain-containing protein 8 (ZCCHC8) (Homo sapiens (Human)).